A 110-amino-acid chain; its full sequence is Large ribosomal subunit protein uL22 (110 aa).

This sequence belongs to the universal ribosomal protein uL22 family. As to quaternary structure, part of the 50S ribosomal subunit.

Functionally, this protein binds specifically to 23S rRNA; its binding is stimulated by other ribosomal proteins, e.g. L4, L17, and L20. It is important during the early stages of 50S assembly. It makes multiple contacts with different domains of the 23S rRNA in the assembled 50S subunit and ribosome. In terms of biological role, the globular domain of the protein is located near the polypeptide exit tunnel on the outside of the subunit, while an extended beta-hairpin is found that lines the wall of the exit tunnel in the center of the 70S ribosome. The protein is Large ribosomal subunit protein uL22 of Delftia acidovorans (strain DSM 14801 / SPH-1).